Consider the following 605-residue polypeptide: Sulfite reductase [NADPH] flavoprotein alpha-component (605 aa).

Positions 68–206 constitute a Flavodoxin-like domain; sequence VTVLYGSQTG…PAAEWLEGVL (139 aa). FMN contacts are provided by residues 74-78, 121-126, and 154-185; these read SQTGN, STHGEG, and VLAL…KRIS. The disordered stretch occupies residues 213 to 234; sequence GGGSAAPAPAAASQTGESSYSR. Residues 235 to 454 enclose the FAD-binding FR-type domain; that stretch reads TNPFRAEVLE…VQHNQNFKLP (220 aa). 392 to 395 is an FAD binding site; it reads RLYS. NADP(+) contacts are provided by residues D495 and 525 to 533; that span reads SRDTEEKVY.

In terms of assembly, alpha(8)-beta(8). The alpha component is a flavoprotein, the beta component is a hemoprotein. It depends on FAD as a cofactor. Requires FMN as cofactor.

The enzyme catalyses hydrogen sulfide + 3 NADP(+) + 3 H2O = sulfite + 3 NADPH + 4 H(+). Its pathway is sulfur metabolism; hydrogen sulfide biosynthesis; hydrogen sulfide from sulfite (NADPH route): step 1/1. In terms of biological role, component of the sulfite reductase complex that catalyzes the 6-electron reduction of sulfite to sulfide. This is one of several activities required for the biosynthesis of L-cysteine from sulfate. The flavoprotein component catalyzes the electron flow from NADPH -&gt; FAD -&gt; FMN to the hemoprotein component. This chain is Sulfite reductase [NADPH] flavoprotein alpha-component (cysJ), found in Bacillus subtilis (strain 168).